The following is a 49-amino-acid chain: Large ribosomal subunit protein bL33B (49 aa).

The protein belongs to the bacterial ribosomal protein bL33 family.

The protein is Large ribosomal subunit protein bL33B of Bacillus cytotoxicus (strain DSM 22905 / CIP 110041 / 391-98 / NVH 391-98).